Here is a 365-residue protein sequence, read N- to C-terminus: 3-dehydroquinate synthase (365 aa).

NAD(+)-binding positions include 69 to 74 (DGEKYK), 103 to 107 (GVIGD), 127 to 128 (TT), lysine 140, and lysine 149. Zn(2+) contacts are provided by glutamate 182, histidine 245, and histidine 262.

It belongs to the sugar phosphate cyclases superfamily. Dehydroquinate synthase family. Co(2+) serves as cofactor. It depends on Zn(2+) as a cofactor. Requires NAD(+) as cofactor.

It is found in the cytoplasm. It carries out the reaction 7-phospho-2-dehydro-3-deoxy-D-arabino-heptonate = 3-dehydroquinate + phosphate. The protein operates within metabolic intermediate biosynthesis; chorismate biosynthesis; chorismate from D-erythrose 4-phosphate and phosphoenolpyruvate: step 2/7. Functionally, catalyzes the conversion of 3-deoxy-D-arabino-heptulosonate 7-phosphate (DAHP) to dehydroquinate (DHQ). The polypeptide is 3-dehydroquinate synthase (Pseudomonas entomophila (strain L48)).